Consider the following 259-residue polypeptide: Cytosolic Fe-S cluster assembly factor Nubp2 homolog (259 aa).

Position 14 to 21 (14 to 21 (GKGGVGKS)) interacts with ATP. Residues C188 and C191 each coordinate [4Fe-4S] cluster.

It belongs to the Mrp/NBP35 ATP-binding proteins family. NUBP2/CFD1 subfamily. As to quaternary structure, heterotetramer of 2 Nubp1 and 2 Nubp2 chains. [4Fe-4S] cluster serves as cofactor.

The protein localises to the cytoplasm. In terms of biological role, component of the cytosolic iron-sulfur (Fe/S) protein assembly (CIA) machinery. Required for maturation of extramitochondrial Fe-S proteins. The Nubp1-Nubp2 heterotetramer forms a Fe-S scaffold complex, mediating the de novo assembly of an Fe-S cluster and its transfer to target apoproteins. The chain is Cytosolic Fe-S cluster assembly factor Nubp2 homolog from Aedes aegypti (Yellowfever mosquito).